A 665-amino-acid polypeptide reads, in one-letter code: Translation factor guf1, mitochondrial (665 aa).

A mitochondrion-targeting transit peptide spans 1 to 53; the sequence is MRGCLQVLRWLSTSPARRPVSSGLRLRSYEIVSPSILRPFTSTVRRQAQASRN. The region spanning 67-247 is the tr-type G domain; it reads ERFRNFCIVA…TVIERIPAPV (181 aa). Residues 76-83, 140-144, and 194-197 contribute to the GTP site; these read AHVDHGKS, DTPGH, and NKVD.

Belongs to the TRAFAC class translation factor GTPase superfamily. Classic translation factor GTPase family. LepA subfamily.

It localises to the mitochondrion inner membrane. The catalysed reaction is GTP + H2O = GDP + phosphate + H(+). Functionally, promotes mitochondrial protein synthesis. May act as a fidelity factor of the translation reaction, by catalyzing a one-codon backward translocation of tRNAs on improperly translocated ribosomes. Binds to mitochondrial ribosomes in a GTP-dependent manner. The protein is Translation factor guf1, mitochondrial (guf1) of Talaromyces stipitatus (strain ATCC 10500 / CBS 375.48 / QM 6759 / NRRL 1006) (Penicillium stipitatum).